A 60-amino-acid polypeptide reads, in one-letter code: MAKHPVPKKKTSKSKRDMRRSHHALVAPNLTECPQCHSKKLQHHICPSCGYYNGRQVLAV.

Residues 1–23 are compositionally biased toward basic residues; the sequence is MAKHPVPKKKTSKSKRDMRRSHH. Residues 1-26 are disordered; that stretch reads MAKHPVPKKKTSKSKRDMRRSHHALV.

The protein belongs to the bacterial ribosomal protein bL32 family.

The chain is Large ribosomal subunit protein bL32 from Deinococcus geothermalis (strain DSM 11300 / CIP 105573 / AG-3a).